The following is a 147-amino-acid chain: MSCGDKIRIAIVVSEFNYDVTRVMEEKAIDHARFLGAEVSLVARSPGTFDTPFIVSRLLATHSEVDAVAVLGAVIKGDTKHDEVVAHQAARKLLDLSIEYGKPVTLGIIGPGASRLEAIERAEEYARRAVESAVKLARRSKELSGEC.

5-amino-6-(D-ribitylamino)uracil-binding positions include F16, 48-50 (TFD), and 73-75 (AVI). 78–79 (DT) is a binding site for (2S)-2-hydroxy-3-oxobutyl phosphate. H81 (proton donor) is an active-site residue. Residue L106 participates in 5-amino-6-(D-ribitylamino)uracil binding. Residue R121 coordinates (2S)-2-hydroxy-3-oxobutyl phosphate.

Belongs to the DMRL synthase family.

It carries out the reaction (2S)-2-hydroxy-3-oxobutyl phosphate + 5-amino-6-(D-ribitylamino)uracil = 6,7-dimethyl-8-(1-D-ribityl)lumazine + phosphate + 2 H2O + H(+). Its pathway is cofactor biosynthesis; riboflavin biosynthesis; riboflavin from 2-hydroxy-3-oxobutyl phosphate and 5-amino-6-(D-ribitylamino)uracil: step 1/2. Its function is as follows. Catalyzes the formation of 6,7-dimethyl-8-ribityllumazine by condensation of 5-amino-6-(D-ribitylamino)uracil with 3,4-dihydroxy-2-butanone 4-phosphate. This is the penultimate step in the biosynthesis of riboflavin. This is 6,7-dimethyl-8-ribityllumazine synthase from Aeropyrum pernix (strain ATCC 700893 / DSM 11879 / JCM 9820 / NBRC 100138 / K1).